A 340-amino-acid chain; its full sequence is MGGMSGLRRVYLARPRGFCAGVVMAIEAVERWAEALKEKGELVVYHEIVHNRVVVERLQAKGVHFVEDLAEVERLRRERRLADTVVFSAHGHPPAVRRQAAEMGLTVLDATCPLVTKVHTEAKRYAKEGYWILLIGDSADHQEIKGTYGEAPERTILVAVHTHVGKDPRLADPRTVEVPDPERVVVLTQTTLSVDDTLATIAILKKRFPKLVVPSRKDLCYATQNRQEAVKRIAPKVEAFLVLTSPHSSNGMRLLELAQSLVGRAYRLERPEELRPEWLEGVESLGITSAASTPEDLVQGVVARLKAQNPGLEVVEEGAWETIAFREPKPLSPEEVLKGA.

[4Fe-4S] cluster is bound at residue Cys19. (2E)-4-hydroxy-3-methylbut-2-enyl diphosphate is bound by residues His50 and His90. Residues His50 and His90 each contribute to the dimethylallyl diphosphate site. Residues His50 and His90 each coordinate isopentenyl diphosphate. Cys112 is a binding site for [4Fe-4S] cluster. A (2E)-4-hydroxy-3-methylbut-2-enyl diphosphate-binding site is contributed by His141. Position 141 (His141) interacts with dimethylallyl diphosphate. His141 is an isopentenyl diphosphate binding site. Glu143 serves as the catalytic Proton donor. Thr190 serves as a coordination point for (2E)-4-hydroxy-3-methylbut-2-enyl diphosphate. Cys220 lines the [4Fe-4S] cluster pocket. 4 residues coordinate (2E)-4-hydroxy-3-methylbut-2-enyl diphosphate: Ser248, Ser249, Asn250, and Ser292. The dimethylallyl diphosphate site is built by Ser248, Ser249, Asn250, and Ser292. Ser248, Ser249, Asn250, and Ser292 together coordinate isopentenyl diphosphate.

Belongs to the IspH family. The cofactor is [4Fe-4S] cluster.

The enzyme catalyses isopentenyl diphosphate + 2 oxidized [2Fe-2S]-[ferredoxin] + H2O = (2E)-4-hydroxy-3-methylbut-2-enyl diphosphate + 2 reduced [2Fe-2S]-[ferredoxin] + 2 H(+). The catalysed reaction is dimethylallyl diphosphate + 2 oxidized [2Fe-2S]-[ferredoxin] + H2O = (2E)-4-hydroxy-3-methylbut-2-enyl diphosphate + 2 reduced [2Fe-2S]-[ferredoxin] + 2 H(+). It participates in isoprenoid biosynthesis; dimethylallyl diphosphate biosynthesis; dimethylallyl diphosphate from (2E)-4-hydroxy-3-methylbutenyl diphosphate: step 1/1. Its pathway is isoprenoid biosynthesis; isopentenyl diphosphate biosynthesis via DXP pathway; isopentenyl diphosphate from 1-deoxy-D-xylulose 5-phosphate: step 6/6. Catalyzes the conversion of 1-hydroxy-2-methyl-2-(E)-butenyl 4-diphosphate (HMBPP) into a mixture of isopentenyl diphosphate (IPP) and dimethylallyl diphosphate (DMAPP). Acts in the terminal step of the DOXP/MEP pathway for isoprenoid precursor biosynthesis. This chain is 4-hydroxy-3-methylbut-2-enyl diphosphate reductase, found in Thermus thermophilus (strain ATCC BAA-163 / DSM 7039 / HB27).